Here is a 160-residue protein sequence, read N- to C-terminus: Putative lipoprotein YfiB (160 aa).

Positions 1–18 (MIKHLVAPLVFTSLILTG) are cleaved as a signal peptide. Residue Cys19 is the site of N-palmitoyl cysteine attachment. Cys19 is lipidated: S-diacylglycerol cysteine. The region spanning 43 to 160 (AGDWSLGLSD…RRVAVVITTP (118 aa)) is the OmpA-like domain.

It belongs to the outer membrane OOP (TC 1.B.6) superfamily.

It is found in the cell membrane. The chain is Putative lipoprotein YfiB (yfiB) from Escherichia coli (strain K12).